The sequence spans 444 residues: Enolase (444 aa).

His-163 and Glu-172 together coordinate substrate. The active-site Proton donor is the Glu-215. Asp-250, Glu-300, and Asp-327 together coordinate Mg(2+). Residues Glu-300 and Asp-327 each coordinate substrate. The Proton acceptor role is filled by Lys-352. Residues Ser-379–Ser-382 and Lys-403 contribute to the substrate site.

Belongs to the enolase family. As to quaternary structure, homodimer. Mg(2+) is required as a cofactor.

The protein resides in the cytoplasm. It carries out the reaction (2R)-2-phosphoglycerate = phosphoenolpyruvate + H2O. The protein operates within carbohydrate degradation; glycolysis; pyruvate from D-glyceraldehyde 3-phosphate: step 4/5. This is Enolase (PGH1) from Mesembryanthemum crystallinum (Common ice plant).